The chain runs to 437 residues: ATP-dependent protease ATPase subunit HslU (437 aa).

ATP-binding positions include I18, 60 to 65 (GVGKTE), D250, E315, and R387.

The protein belongs to the ClpX chaperone family. HslU subfamily. In terms of assembly, a double ring-shaped homohexamer of HslV is capped on each side by a ring-shaped HslU homohexamer. The assembly of the HslU/HslV complex is dependent on binding of ATP.

Its subcellular location is the cytoplasm. ATPase subunit of a proteasome-like degradation complex; this subunit has chaperone activity. The binding of ATP and its subsequent hydrolysis by HslU are essential for unfolding of protein substrates subsequently hydrolyzed by HslV. HslU recognizes the N-terminal part of its protein substrates and unfolds these before they are guided to HslV for hydrolysis. In Dinoroseobacter shibae (strain DSM 16493 / NCIMB 14021 / DFL 12), this protein is ATP-dependent protease ATPase subunit HslU.